A 161-amino-acid chain; its full sequence is Troponin C, slow skeletal and cardiac muscles (161 aa).

An N-acetylmethionine modification is found at Met-1. 4 consecutive EF-hand domains span residues 16–51, 52–87, 92–127, and 128–161; these read QKNEFKAAFDIFVLGAEDGCISTKELGKVMRMLGQN, PTPEELQEMIDEVDEDGSGTVDFDEFLVMMVRCMKD, KSEEELSDLFRMFDKNADGYIDLEELKIMLQATGET, and ITEDDIEELMKDGDKNNDGRIDYDEFLEFMKGVE. 5 residues coordinate Ca(2+): Asp-65, Asp-67, Ser-69, Thr-71, and Glu-76. A Phosphoserine modification is found at Ser-98. Ca(2+) is bound by residues Asp-105, Asn-107, Asp-109, Tyr-111, Glu-116, Asp-141, Asn-143, Asp-145, Arg-147, and Glu-152.

It belongs to the troponin C family.

Troponin is the central regulatory protein of striated muscle contraction. Tn consists of three components: Tn-I which is the inhibitor of actomyosin ATPase, Tn-T which contains the binding site for tropomyosin and Tn-C. The binding of calcium to Tn-C abolishes the inhibitory action of Tn on actin filaments. This is Troponin C, slow skeletal and cardiac muscles (TNNC1) from Bos taurus (Bovine).